Consider the following 121-residue polypeptide: Basic phospholipase A2 homolog zhaoermiatoxin (121 aa).

Disulfide bonds link C26-C115, C28-C44, C43-C95, C49-C121, C50-C88, C57-C81, and C75-C86.

This sequence belongs to the phospholipase A2 family. Group II subfamily. R49 sub-subfamily. Homodimer. Expressed by the venom gland.

The protein resides in the secreted. In terms of biological role, snake venom phospholipase A2 homolog that induces myonecrosis, and edema. Has low myotoxic activity. This is Basic phospholipase A2 homolog zhaoermiatoxin from Protobothrops mangshanensis (Mangshan pitviper).